We begin with the raw amino-acid sequence, 753 residues long: Serine/threonine-protein phosphatase with EF-hands 2 (753 aa).

Residues 21–46 (KAAALIQRWYRRYVARLEMRRRCTWS) enclose the IQ domain. The segment at 128 to 540 (ATALVEAFRL…PHIVQYQANK (413 aa)) is catalytic. Asp-179, His-181, Asp-208, and Asn-240 together coordinate Mn(2+). His-241 serves as the catalytic Proton donor. His-292 lines the Mn(2+) pocket. Disordered regions lie at residues 318 to 382 (CKTR…GSLD) and 409 to 435 (VTGE…KPTQ). The span at 322–333 (QKSEKQMEEKRR) shows a compositional bias: basic and acidic residues. Over residues 348–361 (LPESRSLPSSPLRL) the composition is skewed to low complexity. The segment covering 366 to 377 (AQKTSRSSSIPC) has biased composition (polar residues). His-488 lines the Mn(2+) pocket. EF-hand domains are found at residues 568–603 (AHSS…VLHL), 652–687 (RNRS…FSSH), and 692–727 (ITDD…VEKS). Ca(2+)-binding residues include Asp-665, Asp-667, Ser-669, Glu-676, Asp-705, Asn-707, Asp-709, His-711, and Glu-716. A disordered region spans residues 732–753 (DASECPQATNAKDSGCSSPGAH). Polar residues predominate over residues 737 to 753 (PQATNAKDSGCSSPGAH).

Belongs to the PPP phosphatase family. Mn(2+) serves as cofactor. In terms of tissue distribution, retinal specific.

It is found in the cytoplasm. It localises to the cell projection. The protein localises to the cilium. Its subcellular location is the photoreceptor outer segment. The protein resides in the photoreceptor inner segment. The catalysed reaction is O-phospho-L-seryl-[protein] + H2O = L-seryl-[protein] + phosphate. The enzyme catalyses O-phospho-L-threonyl-[protein] + H2O = L-threonyl-[protein] + phosphate. Its activity is regulated as follows. Activated by calcium. May play a role in phototransduction. May dephosphorylate photoactivated rhodopsin. May function as a calcium sensing regulator of ionic currents, energy production or synaptic transmission. This chain is Serine/threonine-protein phosphatase with EF-hands 2 (PPEF2), found in Homo sapiens (Human).